The sequence spans 111 residues: DIVLTQSPASLAVSLGQRATISCRASKSVSAFGYSYMHWYQQKPGQPPKLLIYLASNLESGVPARFSGSGSGTDFTLNIHPVEEEDAVTYYCQHSRELPPTFGGGTKLEIK.

A framework-1 region spans residues D1–C23. An intrachain disulfide couples C23 to C92. The segment at R24–H38 is complementarity-determining-1. Residues W39–Y53 are framework-2. The interval L54–S60 is complementarity-determining-2. Residues G61–C92 are framework-3. Residues Q93–T101 form a complementarity-determining-3 region. The framework-4 stretch occupies residues F102–K111.

In Mus musculus (Mouse), this protein is Ig kappa chain V-III region PC 7940.